The chain runs to 150 residues: 3-hydroxyacyl-[acyl-carrier-protein] dehydratase FabZ (150 aa).

The active site involves histidine 51.

It belongs to the thioester dehydratase family. FabZ subfamily.

Its subcellular location is the cytoplasm. It catalyses the reaction a (3R)-hydroxyacyl-[ACP] = a (2E)-enoyl-[ACP] + H2O. Involved in unsaturated fatty acids biosynthesis. Catalyzes the dehydration of short chain beta-hydroxyacyl-ACPs and long chain saturated and unsaturated beta-hydroxyacyl-ACPs. This chain is 3-hydroxyacyl-[acyl-carrier-protein] dehydratase FabZ, found in Legionella pneumophila (strain Lens).